The primary structure comprises 283 residues: 4-diphosphocytidyl-2-C-methyl-D-erythritol kinase (283 aa).

The active site involves Lys10. 99–109 is a binding site for ATP; the sequence is PMGGGLGGGSS. The active site involves Asp141.

It belongs to the GHMP kinase family. IspE subfamily. In terms of assembly, homodimer.

It catalyses the reaction 4-CDP-2-C-methyl-D-erythritol + ATP = 4-CDP-2-C-methyl-D-erythritol 2-phosphate + ADP + H(+). It functions in the pathway isoprenoid biosynthesis; isopentenyl diphosphate biosynthesis via DXP pathway; isopentenyl diphosphate from 1-deoxy-D-xylulose 5-phosphate: step 3/6. Functionally, catalyzes the phosphorylation of the position 2 hydroxy group of 4-diphosphocytidyl-2C-methyl-D-erythritol. This is 4-diphosphocytidyl-2-C-methyl-D-erythritol kinase from Salmonella enteritidis PT4 (strain P125109).